Here is a 177-residue protein sequence, read N- to C-terminus: Large ribosomal subunit protein uL6 (177 aa).

This sequence belongs to the universal ribosomal protein uL6 family. As to quaternary structure, part of the 50S ribosomal subunit.

This protein binds to the 23S rRNA, and is important in its secondary structure. It is located near the subunit interface in the base of the L7/L12 stalk, and near the tRNA binding site of the peptidyltransferase center. The sequence is that of Large ribosomal subunit protein uL6 from Methylobacterium nodulans (strain LMG 21967 / CNCM I-2342 / ORS 2060).